A 167-amino-acid chain; its full sequence is Protein-export protein SecB (167 aa).

The segment at 1–20 (MASNDDAPVGAANGNGNTGA) is disordered.

The protein belongs to the SecB family. In terms of assembly, homotetramer, a dimer of dimers. One homotetramer interacts with 1 SecA dimer.

It localises to the cytoplasm. In terms of biological role, one of the proteins required for the normal export of preproteins out of the cell cytoplasm. It is a molecular chaperone that binds to a subset of precursor proteins, maintaining them in a translocation-competent state. It also specifically binds to its receptor SecA. In Mesorhizobium japonicum (strain LMG 29417 / CECT 9101 / MAFF 303099) (Mesorhizobium loti (strain MAFF 303099)), this protein is Protein-export protein SecB.